Reading from the N-terminus, the 321-residue chain is L-carnitine dehydrogenase (321 aa).

NAD(+) is bound at residue 14–19; sequence GSGVIG. The tract at residues 317–321 is important for catalytic activity; sequence MTFSE.

Belongs to the 3-hydroxyacyl-CoA dehydrogenase family. L-carnitine dehydrogenase subfamily. As to quaternary structure, homodimer.

The protein localises to the cytoplasm. The catalysed reaction is carnitine + NAD(+) = 3-dehydrocarnitine + NADH + H(+). It participates in amine and polyamine metabolism; carnitine metabolism. With respect to regulation, the enzyme activity is strongly inhibited by Ag(+), Ni(+), Hg(+), and p-chloromercuribenzoate, and partially inhibited by Li(+), Ca(2+), Mn(2+), Co(2+), Cu(2+), and Zn(2+). Catalyzes the NAD(+)-dependent oxidation of L-carnitine to 3-dehydrocarnitine. Is specific for L-carnitine and NAD(+) as substrates since D-carnitine, other carnitine analogs such as choline and betaine, and NADP(+) are not substrates. Despite a high similarity to 3-hydroxyacyl-CoA dehydrogenases, cannot dehydrogenate 3-hydroxybutylate and 3-hydroxybutyl-CoA. Is probably involved in a L-carnitine degradation pathway that allows Pseudomonas sp. strain NBRC 13558 to grow on L-carnitine as the sole source of carbon and nitrogen. The polypeptide is L-carnitine dehydrogenase (Pseudomonas sp).